The sequence spans 138 residues: Altered inheritance of mitochondria protein 11 (138 aa).

The next 2 helical transmembrane spans lie at 17–34 (ARFY…RLIS) and 67–89 (LTYA…CWAL).

It belongs to the AIM11 family.

The protein localises to the membrane. The protein is Altered inheritance of mitochondria protein 11 (AIM11) of Saccharomyces cerevisiae (strain JAY291) (Baker's yeast).